The following is a 1538-amino-acid chain: Phenolphthiocerol/phthiocerol polyketide synthase subunit B (1538 aa).

The region spanning 33–455 (AEPVAVVGIG…GTNAHVIIEQ (423 aa)) is the Ketosynthase family 3 (KS3) domain. Active-site for beta-ketoacyl synthase activity residues include Cys-205, His-340, and His-377. Residues 553–882 (DGSPGPGTVF…TNLYTADIAH (330 aa)) form an acyltransferase region. Ser-649 functions as the For malonyltransferase activity in the catalytic mechanism. NADP(+) is bound at residue 1153–1196 (SQLVIGATGNIGPHLIRQLARMGAKTIVAMARKPGALDELTQCL). The tract at residues 1153–1328 (SQLVIGATGN…TVVDWGLWKS (176 aa)) is beta-ketoacyl reductase. The Carrier domain maps to 1423-1498 (DMLFDHVGAL…SLTDYLATVL (76 aa)). Ser-1458 bears the O-(pantetheine 4'-phosphoryl)serine mark.

Requires NADP(+) as cofactor. Pantetheine 4'-phosphate is required as a cofactor.

The catalysed reaction is icosanoyl-[(phenol)carboxyphthiodiolenone synthase] + 2 (S)-methylmalonyl-CoA + 3 malonyl-CoA + 5 NADPH + 10 H(+) = C32-carboxyphthiodiolenone-[(phenol)carboxyphthiodiolenone synthase] + 5 CO2 + 5 NADP(+) + 5 CoA + 2 H2O. It carries out the reaction docosanoyl-[(phenol)carboxyphthiodiolenone synthase] + 2 (S)-methylmalonyl-CoA + 3 malonyl-CoA + 5 NADPH + 10 H(+) = C34-carboxyphthiodiolenone-[(phenol)carboxyphthiodiolenone synthase] + 5 CO2 + 5 NADP(+) + 5 CoA + 2 H2O. It catalyses the reaction 17-(4-hydroxyphenyl)heptadecanoyl-[(phenol)carboxyphthiodiolenone synthase] + 2 (S)-methylmalonyl-CoA + 3 malonyl-CoA + 5 NADPH + 10 H(+) = C35-(phenol)carboxyphthiodiolenone-[(phenol)carboxyphthiodiolenone synthase] + 5 CO2 + 5 NADP(+) + 5 CoA + 2 H2O. The enzyme catalyses 19-(4-hydroxyphenyl)nonadecanoyl-[(phenol)carboxyphthiodiolenone synthase] + 2 (S)-methylmalonyl-CoA + 3 malonyl-CoA + 5 NADPH + 10 H(+) = C37-(phenol)carboxyphthiodiolenone-[(phenol)carboxyphthiodiolenone synthase] + 5 CO2 + 5 NADP(+) + 5 CoA + 2 H2O. It functions in the pathway lipid metabolism; fatty acid biosynthesis. Functionally, part of the PpsABCDE complex involved in the biosynthesis of the lipid core common to phthiocerols and phenolphthiocerols by successive additions of malonyl-CoA or methylmalonyl-CoA extender units. PpsA can accept as substrate the activated forms of either icosanoyl (C20), docosanoyl (C22) or lignoceroyl (C24) groups from FadD26, or a (4-hydroxyphenyl)-C17 or (4-hydroxyphenyl)-C19 fatty acyl from FadD29. PpsA initiates the biosynthesis and extends its substrate using a malonyl-CoA extender unit. The PpsB and PpsC proteins add the second and third malonyl-CoA extender units. PpsD adds an (R)-methylmalonyl unit and PpsE adds a second (R)-methylmalonyl unit. The incorporation of the methylmalonyl units results in formation of two branched methyl groups in the elongated product. This chain is Phenolphthiocerol/phthiocerol polyketide synthase subunit B (ppsB), found in Mycobacterium tuberculosis (strain CDC 1551 / Oshkosh).